A 404-amino-acid polypeptide reads, in one-letter code: Transcriptional repressor OPI1 (404 aa).

Ser10 is subject to Phosphoserine. The disordered stretch occupies residues 25 to 51 (QSCRQKSQPSEDVSQADKMPASESSTT). Positions 26–37 (SCRQKSQPSEDV) are enriched in polar residues. Positions 109–138 (KRQKLSRAIAKGKDNLKEYKLNMSIESKKR) are basic motif. The leucine-zipper stretch occupies residues 139 to 160 (LVTCLHLLKLANKQLSDKISCL). Disordered stretches follow at residues 170–201 (HPLH…DEEF), 305–327 (LQQQ…SSVT), and 378–404 (QQQQ…DSKD). The segment covering 186-201 (GEDETSSDEDDDDEEF) has biased composition (acidic residues). The FFAT motif lies at 200–206 (EFFDASE). The segment covering 378 to 387 (QQQQYRQQQQ) has biased composition (low complexity). Polar residues predominate over residues 394 to 404 (KPSQDNVDSKD).

Interacts with SCS2.

Its subcellular location is the endoplasmic reticulum. It is found in the nucleus. Its function is as follows. Negative regulator of the transcriptional complex INO2-INO4 in response to phospholipid precursor availability. When precursors become limiting, OPI1 is retained at the endoplasmic reticulum (ER) and INO2-INO4 activates INO1 and other genes required for phospholipid biosynthesis, whereas abundant precursor availability results in targeting of OPI1 to the nucleus to repress transcription of these genes. Binds directly to phosphatidic acid, which is required for ER targeting and may act as sensing mechanism for precursor availability, as phosphatidic acid becomes rapidly depleted upon phospholipid biosynthesis. This is Transcriptional repressor OPI1 (OPI1) from Saccharomyces cerevisiae (strain ATCC 204508 / S288c) (Baker's yeast).